The following is an 872-amino-acid chain: Leucine--tRNA ligase (872 aa).

Residues 42-52 (PYPSGSLHMGH) carry the 'HIGH' region motif. The 'KMSKS' region signature appears at 634–638 (TMSKS). Position 637 (Lys637) interacts with ATP.

This sequence belongs to the class-I aminoacyl-tRNA synthetase family.

The protein localises to the cytoplasm. It carries out the reaction tRNA(Leu) + L-leucine + ATP = L-leucyl-tRNA(Leu) + AMP + diphosphate. The protein is Leucine--tRNA ligase of Trichormus variabilis (strain ATCC 29413 / PCC 7937) (Anabaena variabilis).